A 239-amino-acid polypeptide reads, in one-letter code: MGVFGYLRERTPCHLTLLDPVDVGPEEVPEVLESLVKAGTDAVMVGGSTAHASQVEAVVEAIREVADVPVILFPNGPEGLAPNADAVLFMSLLNSRNTYYLIEAQVKGAPLVERFGLESIPTGYLIVGEWGTTVSVVGDARVIPFDRVEVIVAYALAAKHLGMKAVYLEAGSGAPEPVPPEVVRRVSGIGVFTIVGGGIRSPETARELAEAGADAIVTGTAVERDPDLAAEIVEAIKDL.

Positions 19 and 48 each coordinate Mg(2+). Sn-glycerol 1-phosphate is bound by residues 167 to 173 (YLEAGSG), 197 to 198 (GG), and 219 to 220 (GT).

This sequence belongs to the GGGP/HepGP synthase family. Group II subfamily. Requires Mg(2+) as cofactor.

It localises to the cytoplasm. It catalyses the reaction sn-glycerol 1-phosphate + (2E,6E,10E)-geranylgeranyl diphosphate = sn-3-O-(geranylgeranyl)glycerol 1-phosphate + diphosphate. It participates in membrane lipid metabolism; glycerophospholipid metabolism. Functionally, prenyltransferase that catalyzes the transfer of the geranylgeranyl moiety of geranylgeranyl diphosphate (GGPP) to the C3 hydroxyl of sn-glycerol-1-phosphate (G1P). This reaction is the first ether-bond-formation step in the biosynthesis of archaeal membrane lipids. The chain is Geranylgeranylglyceryl phosphate synthase from Methanopyrus kandleri (strain AV19 / DSM 6324 / JCM 9639 / NBRC 100938).